Reading from the N-terminus, the 455-residue chain is Bifunctional protein GlmU (455 aa).

The tract at residues 1–226 (MSLDIVILAA…AMEVQGANDR (226 aa)) is pyrophosphorylase. Residues 8 to 11 (LAAG), lysine 22, glutamine 73, 78 to 79 (GT), 99 to 101 (YGD), glycine 136, glutamate 151, asparagine 166, and asparagine 224 each bind UDP-N-acetyl-alpha-D-glucosamine. Mg(2+) is bound at residue aspartate 101. Asparagine 224 lines the Mg(2+) pocket. The segment at 227-247 (RQLSELERHYQLREGRRLMAQ) is linker. Positions 248 to 455 (GVTLRDPARF…WKRPEKIKKS (208 aa)) are N-acetyltransferase. Arginine 330 and lysine 348 together coordinate UDP-N-acetyl-alpha-D-glucosamine. Histidine 360 serves as the catalytic Proton acceptor. Tyrosine 363 and asparagine 374 together coordinate UDP-N-acetyl-alpha-D-glucosamine. Acetyl-CoA contacts are provided by residues alanine 377, 383–384 (NY), serine 402, alanine 420, and arginine 437.

It in the N-terminal section; belongs to the N-acetylglucosamine-1-phosphate uridyltransferase family. The protein in the C-terminal section; belongs to the transferase hexapeptide repeat family. As to quaternary structure, homotrimer. It depends on Mg(2+) as a cofactor.

It localises to the cytoplasm. The enzyme catalyses alpha-D-glucosamine 1-phosphate + acetyl-CoA = N-acetyl-alpha-D-glucosamine 1-phosphate + CoA + H(+). The catalysed reaction is N-acetyl-alpha-D-glucosamine 1-phosphate + UTP + H(+) = UDP-N-acetyl-alpha-D-glucosamine + diphosphate. Its pathway is nucleotide-sugar biosynthesis; UDP-N-acetyl-alpha-D-glucosamine biosynthesis; N-acetyl-alpha-D-glucosamine 1-phosphate from alpha-D-glucosamine 6-phosphate (route II): step 2/2. It participates in nucleotide-sugar biosynthesis; UDP-N-acetyl-alpha-D-glucosamine biosynthesis; UDP-N-acetyl-alpha-D-glucosamine from N-acetyl-alpha-D-glucosamine 1-phosphate: step 1/1. The protein operates within bacterial outer membrane biogenesis; LPS lipid A biosynthesis. Its function is as follows. Catalyzes the last two sequential reactions in the de novo biosynthetic pathway for UDP-N-acetylglucosamine (UDP-GlcNAc). The C-terminal domain catalyzes the transfer of acetyl group from acetyl coenzyme A to glucosamine-1-phosphate (GlcN-1-P) to produce N-acetylglucosamine-1-phosphate (GlcNAc-1-P), which is converted into UDP-GlcNAc by the transfer of uridine 5-monophosphate (from uridine 5-triphosphate), a reaction catalyzed by the N-terminal domain. In Pseudomonas putida (strain ATCC 47054 / DSM 6125 / CFBP 8728 / NCIMB 11950 / KT2440), this protein is Bifunctional protein GlmU.